The chain runs to 360 residues: Biotin synthase (360 aa).

The interval 1–25 (MQHAPLNFVPDAAKVPPTPGQSPNA) is disordered. In terms of domain architecture, Radical SAM core spans 58–285 (NAVQLSTLLS…KAMVRLSAGR (228 aa)). Residues Cys73, Cys77, and Cys80 each coordinate [4Fe-4S] cluster. Residues Cys117, Cys148, Cys208, and Arg280 each contribute to the [2Fe-2S] cluster site. Residues 340 to 360 (QAEGAQHSHSSHCHIDITPAD) are disordered.

It belongs to the radical SAM superfamily. Biotin synthase family. In terms of assembly, homodimer. [4Fe-4S] cluster is required as a cofactor. The cofactor is [2Fe-2S] cluster.

The catalysed reaction is (4R,5S)-dethiobiotin + (sulfur carrier)-SH + 2 reduced [2Fe-2S]-[ferredoxin] + 2 S-adenosyl-L-methionine = (sulfur carrier)-H + biotin + 2 5'-deoxyadenosine + 2 L-methionine + 2 oxidized [2Fe-2S]-[ferredoxin]. The protein operates within cofactor biosynthesis; biotin biosynthesis; biotin from 7,8-diaminononanoate: step 2/2. In terms of biological role, catalyzes the conversion of dethiobiotin (DTB) to biotin by the insertion of a sulfur atom into dethiobiotin via a radical-based mechanism. In Ralstonia nicotianae (strain ATCC BAA-1114 / GMI1000) (Ralstonia solanacearum), this protein is Biotin synthase.